Here is a 263-residue protein sequence, read N- to C-terminus: Complement control protein C3 (263 aa).

The N-terminal stretch at 1-19 (MKVESVTFLTLLGIGCVLS) is a signal peptide. Sushi domains lie at 20–83 (CCTI…QCIK), 84–145 (RRCP…ICES), 146–203 (VKCQ…TCQI), and 204–263 (VKCP…KCVR). Disulfide bonds link cysteine 21/cysteine 70, cysteine 54/cysteine 81, cysteine 86/cysteine 126, cysteine 112/cysteine 143, cysteine 148/cysteine 190, cysteine 176/cysteine 201, cysteine 206/cysteine 248, and cysteine 234/cysteine 261.

It belongs to the receptors of complement activation (RCA) family. Heterodimer with A56 protein; disulfide-linked.

The protein localises to the virion membrane. It is found in the host cell membrane. The protein resides in the secreted. Its function is as follows. Serves to protect the virus against complement attack by inhibiting both classical and alternative pathways of complement activation. Binds C3b and C4b. The polypeptide is Complement control protein C3 (Vaccinia virus (strain Copenhagen) (VACV)).